The following is an 88-amino-acid chain: HssA/B-like protein 19 (88 aa).

Belongs to the hssA/B family.

This Dictyostelium discoideum (Social amoeba) protein is HssA/B-like protein 19 (hssl19).